Reading from the N-terminus, the 211-residue chain is Transcription antitermination protein NusB (211 aa).

This sequence belongs to the NusB family.

Functionally, involved in transcription antitermination. Required for transcription of ribosomal RNA (rRNA) genes. Binds specifically to the boxA antiterminator sequence of the ribosomal RNA (rrn) operons. The chain is Transcription antitermination protein NusB from Trichormus variabilis (strain ATCC 29413 / PCC 7937) (Anabaena variabilis).